Reading from the N-terminus, the 102-residue chain is NADH-quinone oxidoreductase subunit K (102 aa).

Transmembrane regions (helical) follow at residues 6–26 (MEHG…GLLI), 30–50 (LLFI…AFVV), and 65–85 (ILVI…LLLL).

Belongs to the complex I subunit 4L family. As to quaternary structure, NDH-1 is composed of 14 different subunits. Subunits NuoA, H, J, K, L, M, N constitute the membrane sector of the complex.

It localises to the cell inner membrane. The catalysed reaction is a quinone + NADH + 5 H(+)(in) = a quinol + NAD(+) + 4 H(+)(out). In terms of biological role, NDH-1 shuttles electrons from NADH, via FMN and iron-sulfur (Fe-S) centers, to quinones in the respiratory chain. The immediate electron acceptor for the enzyme in this species is believed to be ubiquinone. Couples the redox reaction to proton translocation (for every two electrons transferred, four hydrogen ions are translocated across the cytoplasmic membrane), and thus conserves the redox energy in a proton gradient. This chain is NADH-quinone oxidoreductase subunit K, found in Aeromonas salmonicida (strain A449).